A 236-amino-acid polypeptide reads, in one-letter code: 7-cyano-7-deazaguanine synthase (236 aa).

7 to 17 (CSGGLDSVSLA) contacts ATP. Zn(2+) is bound by residues C185, C193, C196, and C199.

It belongs to the QueC family. It depends on Zn(2+) as a cofactor.

It carries out the reaction 7-carboxy-7-deazaguanine + NH4(+) + ATP = 7-cyano-7-deazaguanine + ADP + phosphate + H2O + H(+). Its pathway is purine metabolism; 7-cyano-7-deazaguanine biosynthesis. In terms of biological role, catalyzes the ATP-dependent conversion of 7-carboxy-7-deazaguanine (CDG) to 7-cyano-7-deazaguanine (preQ(0)). This is 7-cyano-7-deazaguanine synthase from Rhizobium meliloti (strain 1021) (Ensifer meliloti).